The chain runs to 203 residues: MATKKKVLLKVIILGDSGVGKTSLMNQYVNKKFSNQYKATIGADFLTKELMVDDRVVTMQIWDTAGQERFQSLGVAFYRGADCCVLCYDVNVAKTFENLDSWRDEFLIQAGPRDPDNFPFVVLGNKIDLENQRVVSQKRAASWCQSKGNIPYFETSAKEAINVEQAFQTIARNAIKLEDGLVFPIPTNIQVIPEPQPAKSGCC.

GTP is bound by residues 15–22 (GDSGVGKT), 34–40 (SNQYKAT), 63–67 (DTAGQ), 125–128 (NKID), and 157–158 (AK). Positions 37–45 (YKATIGADF) match the Effector region motif. S-geranylgeranyl cysteine attachment occurs at residues C202 and C203.

This sequence belongs to the small GTPase superfamily. Rab family.

The protein localises to the late endosome membrane. It is found in the lysosome membrane. Its subcellular location is the cytoplasmic vesicle. It localises to the autophagosome membrane. The protein resides in the lipid droplet. It catalyses the reaction GTP + H2O = GDP + phosphate + H(+). Small GTPase which cycles between active GTP-bound and inactive GDP-bound states. In its active state, binds to a variety of effector proteins playing a key role in the regulation of endo-lysosomal trafficking. Governs early-to-late endosomal maturation, microtubule minus-end as well as plus-end directed endosomal migration and positioning, and endosome-lysosome transport through different protein-protein interaction cascades. Involved in lipophagy, a cytosolic lipase-independent autophagic pathway. The protein is Ras-related protein Rab-7a (rab7A) of Dictyostelium discoideum (Social amoeba).